Here is a 265-residue protein sequence, read N- to C-terminus: 4-diphosphocytidyl-2-C-methyl-D-erythritol kinase (265 aa).

The active site involves Lys-8. 95 to 105 (PIGAGLGGGSS) lines the ATP pocket. Residue Asp-135 is part of the active site.

It belongs to the GHMP kinase family. IspE subfamily.

The catalysed reaction is 4-CDP-2-C-methyl-D-erythritol + ATP = 4-CDP-2-C-methyl-D-erythritol 2-phosphate + ADP + H(+). It participates in isoprenoid biosynthesis; isopentenyl diphosphate biosynthesis via DXP pathway; isopentenyl diphosphate from 1-deoxy-D-xylulose 5-phosphate: step 3/6. In terms of biological role, catalyzes the phosphorylation of the position 2 hydroxy group of 4-diphosphocytidyl-2C-methyl-D-erythritol. This Ureaplasma parvum serovar 3 (strain ATCC 27815 / 27 / NCTC 11736) protein is 4-diphosphocytidyl-2-C-methyl-D-erythritol kinase.